Here is a 196-residue protein sequence, read N- to C-terminus: Imidazoleglycerol-phosphate dehydratase (196 aa).

It belongs to the imidazoleglycerol-phosphate dehydratase family.

Its subcellular location is the cytoplasm. The catalysed reaction is D-erythro-1-(imidazol-4-yl)glycerol 3-phosphate = 3-(imidazol-4-yl)-2-oxopropyl phosphate + H2O. The protein operates within amino-acid biosynthesis; L-histidine biosynthesis; L-histidine from 5-phospho-alpha-D-ribose 1-diphosphate: step 6/9. The protein is Imidazoleglycerol-phosphate dehydratase of Clostridium botulinum (strain 657 / Type Ba4).